Here is a 610-residue protein sequence, read N- to C-terminus: Dihydroxy-acid dehydratase (610 aa).

D81 serves as a coordination point for Mg(2+). C122 contacts [2Fe-2S] cluster. Positions 123 and 124 each coordinate Mg(2+). The residue at position 124 (K124) is an N6-carboxylysine. C193 lines the [2Fe-2S] cluster pocket. Position 489 (E489) interacts with Mg(2+). S515 serves as the catalytic Proton acceptor.

The protein belongs to the IlvD/Edd family. Homodimer. It depends on [2Fe-2S] cluster as a cofactor. Mg(2+) serves as cofactor.

The catalysed reaction is (2R)-2,3-dihydroxy-3-methylbutanoate = 3-methyl-2-oxobutanoate + H2O. The enzyme catalyses (2R,3R)-2,3-dihydroxy-3-methylpentanoate = (S)-3-methyl-2-oxopentanoate + H2O. It participates in amino-acid biosynthesis; L-isoleucine biosynthesis; L-isoleucine from 2-oxobutanoate: step 3/4. The protein operates within amino-acid biosynthesis; L-valine biosynthesis; L-valine from pyruvate: step 3/4. Functionally, functions in the biosynthesis of branched-chain amino acids. Catalyzes the dehydration of (2R,3R)-2,3-dihydroxy-3-methylpentanoate (2,3-dihydroxy-3-methylvalerate) into 2-oxo-3-methylpentanoate (2-oxo-3-methylvalerate) and of (2R)-2,3-dihydroxy-3-methylbutanoate (2,3-dihydroxyisovalerate) into 2-oxo-3-methylbutanoate (2-oxoisovalerate), the penultimate precursor to L-isoleucine and L-valine, respectively. The polypeptide is Dihydroxy-acid dehydratase (Xylella fastidiosa (strain 9a5c)).